Here is a 1024-residue protein sequence, read N- to C-terminus: MTMITDSLAVVLQRRDWENPGVTQLNRLAAHPPFASWRNSEEARTDRPSQQLRSLNGEWQFVWFPAPEAVPESWLECDLPDADTVVVPSNWQMHGYDAPIYTNVTYPITVNPPFVPAENPTGCYSLTFNIDECWLQEGQTRIIFDGVNSAFHLWCNGRWVGYGQDSRLPSEFDLSAFLRAGKNRLAVMVLRWSDGSYLEDQDMWRMSGIFRDVSLLHKPTTQISDFHVATRFNDDFSRAVLEAEVQMYGELRDELRVTVSLWQGETQVASGTAPFGGEIIDERGGYADRVTLRLNVENPALWSAEIPNIYRAVVELHTADGTLIEAEACDVGFREVRIENGLLLLNGKPLLIRGVNRHEHHPLHGQVMDEQTMVQDILLMKQNNFNAVRCSHYPNHPLWYTLCDRYGLYVVDEANIETHGMVPMNRLTDDPRWLPAMSERVTRMVLRDRNHPSVIIWSLGNESGHGANHDALYRWIKSVDPSRPVQYEGGGADTTATDIICPMYARVDEDQPFPAVPKWSIKKWLSLPGELRPLILCEYAHAMGNSLGGFAKYWQAFRQYPRLQGGFVWDWVDQSLIKYDENGNPWSAYGGDFGDTPNDRQFCMNGLVFADRTPHPALTEAKHQQQFFQFRLSGRTIEVTSEYLFRHSDNELLHWTVALDGKPLASGEVPLDVAPQGKQVIELPELPQPESAGQLWLTVHVVQPNATAWSEAGHISAWQQWRLAENLSVTLPTASHAIPHLTTSEMDFCIELGNKRWQFNRQSGFLSQMWIGDEKQLLTPLRDQFTRAPLDNDIGVSEATRIDPNAWVERWKAAGHYQAEAALLQCTADTLADAVLITTAHAWQHQGKTLFISRKTYRIDGSGQMAITVDVEVASDTPHPARIGLTCQLAQVAERVNWLGLGPQENYPDRLTAACFDRWDLPLSDMYTPYVFPSENGLRCGTRELNYGPHQWRGDFQFNISRYSQQQLMETSHRHLLHAEEGTWLNIDGFHMGIGGDDSWSPSVSAEFQLSAGRYHYQLVWCQK.

Substrate contacts are provided by Asn-103 and Asp-202. Asp-202 is a Na(+) binding site. Glu-417, His-419, and Glu-462 together coordinate Mg(2+). Substrate contacts are provided by residues Glu-462 and 538–541 (EYAH). The active-site Proton donor is Glu-462. Glu-538 (nucleophile) is an active-site residue. Residue Asn-598 coordinates Mg(2+). 2 residues coordinate Na(+): Phe-602 and Asn-605. 2 residues coordinate substrate: Asn-605 and Trp-1000.

The protein belongs to the glycosyl hydrolase 2 family. As to quaternary structure, homotetramer. The cofactor is Mg(2+). It depends on Na(+) as a cofactor.

It carries out the reaction Hydrolysis of terminal non-reducing beta-D-galactose residues in beta-D-galactosides.. The sequence is that of Beta-galactosidase from Escherichia coli O127:H6 (strain E2348/69 / EPEC).